The sequence spans 536 residues: MLRRDFLKYSVALGVASALPLWSRAAFAAERPALPIPDLLTADASNRMQLIVKAGQSTFAGKNATTWGYNGNLLGPAVQLHKGKSVTVDIHNQLAEDTTLHWHGLEIPGIVDGGPQGIIPAGGTRTVTFTPEQRAATCWIHPHKHGKTGRQVAMGLAGLVLIEDDEIRKLRLPKQWGIDDVPVIIQDKRFSADGQIDYQLDIMTAAVGWFGDTLLTNGAIYPQHSAPKGWLRLRLLNGCNARSLNIAASDNRPLYVIASDGGLLAEPVKVTELPLLMGERFEVLVDISDGKAFDLVTLPVSQMGMAIAPFDKPHPVMRIQPLRITASGTLPDTLTTMPALPSLEGLTVRNLKLSMDPRLDMMGMQMLMKKYGAQAMSGMDHDSMNAHMQGGNMGHGEMDHGNMDHSGMNHGAMGNMNHGGKFDFHNANFINGQVFDMNKPMFAAQKGRHERWVISGVGDMMLHPFHIHGTQFRILSENGKAPAAHRTGWKDTVRVEGGISEVLVKFDHDAPKEHAYMAHCHLLEHEDTGMMLGFTV.

The segment at residues Met-1 to Ala-28 is a signal peptide (tat-type signal). Plastocyanin-like domains follow at residues Lys-53–Asp-165, Gly-229–Leu-295, and Phe-424–Val-536. Cu cation contacts are provided by His-101, His-103, His-141, and His-143. Cu cation contacts are provided by His-463, His-466, His-468, His-519, Cys-520, His-521, and His-525.

It belongs to the multicopper oxidase family. As to quaternary structure, monomer. It depends on Cu cation as a cofactor. Post-translationally, predicted to be exported by the Tat system. The position of the signal peptide cleavage has not been experimentally proven.

It localises to the periplasm. It carries out the reaction 4 Cu(+) + O2 + 4 H(+) = 4 Cu(2+) + 2 H2O. Its function is as follows. Multicopper oxidase involved in copper homeostasis and copper tolerance under both aerobic and anaerobic conditions. Is responsible for the oxidation of Cu(+) to the less harmful Cu(2+) in the periplasm, thereby preventing Cu(+) from entering the cytoplasm. This chain is Multicopper oxidase CueO (cueO), found in Salmonella typhimurium (strain LT2 / SGSC1412 / ATCC 700720).